The chain runs to 475 residues: Ribulose bisphosphate carboxylase large chain (475 aa).

The propeptide occupies 1–2; sequence MS. At proline 3 the chain carries N-acetylproline. Lysine 14 bears the N6,N6,N6-trimethyllysine mark. Residues asparagine 123 and threonine 173 each contribute to the substrate site. Residue lysine 175 is the Proton acceptor of the active site. Lysine 177 provides a ligand contact to substrate. Positions 201, 203, and 204 each coordinate Mg(2+). The residue at position 201 (lysine 201) is an N6-carboxylysine. Histidine 294 serves as the catalytic Proton acceptor. 3 residues coordinate substrate: arginine 295, histidine 327, and serine 379.

The protein belongs to the RuBisCO large chain family. Type I subfamily. As to quaternary structure, heterohexadecamer of 8 large chains and 8 small chains. It depends on Mg(2+) as a cofactor.

Its subcellular location is the plastid. It is found in the chloroplast. It carries out the reaction 2 (2R)-3-phosphoglycerate + 2 H(+) = D-ribulose 1,5-bisphosphate + CO2 + H2O. The enzyme catalyses D-ribulose 1,5-bisphosphate + O2 = 2-phosphoglycolate + (2R)-3-phosphoglycerate + 2 H(+). In terms of biological role, ruBisCO catalyzes two reactions: the carboxylation of D-ribulose 1,5-bisphosphate, the primary event in carbon dioxide fixation, as well as the oxidative fragmentation of the pentose substrate in the photorespiration process. Both reactions occur simultaneously and in competition at the same active site. The polypeptide is Ribulose bisphosphate carboxylase large chain (Nymphaea alba (White water-lily)).